The chain runs to 86 residues: ATP synthase epsilon chain (86 aa).

It belongs to the ATPase epsilon chain family. F-type ATPases have 2 components, CF(1) - the catalytic core - and CF(0) - the membrane proton channel. CF(1) has five subunits: alpha(3), beta(3), gamma(1), delta(1), epsilon(1). CF(0) has three main subunits: a, b and c.

It localises to the cell inner membrane. Functionally, produces ATP from ADP in the presence of a proton gradient across the membrane. The sequence is that of ATP synthase epsilon chain (atpC) from Caulobacter vibrioides (strain ATCC 19089 / CIP 103742 / CB 15) (Caulobacter crescentus).